The chain runs to 425 residues: NAD kinase 2, mitochondrial (425 aa).

The transit peptide at Met-1 to Ala-45 directs the protein to the mitochondrion. Residues Gln-20 to Asp-46 are disordered. Residue Lys-59 is modified to N6-acetyllysine; alternate. Lys-59 is subject to N6-succinyllysine; alternate. Position 171 is a phosphoserine (Ser-171). Lys-285 is modified (N6-succinyllysine). Residue Lys-300 is modified to N6-acetyllysine; alternate. N6-succinyllysine; alternate is present on Lys-300. Ser-350 carries the phosphoserine modification. The residue at position 380 (Lys-380) is an N6-acetyllysine.

The protein belongs to the NAD kinase family. As to quaternary structure, homodimer.

Its subcellular location is the mitochondrion. The catalysed reaction is NAD(+) + ATP = ADP + NADP(+) + H(+). Its activity is regulated as follows. Inhibited by NADH, NADPH and NADP(+). Functionally, mitochondrial NAD(+) kinase that phosphorylates NAD(+) to yield NADP(+). Can use both ATP or inorganic polyphosphate as the phosphoryl donor. The protein is NAD kinase 2, mitochondrial (Nadk2) of Rattus norvegicus (Rat).